A 221-amino-acid polypeptide reads, in one-letter code: Thiamine-phosphate synthase (221 aa).

4-amino-2-methyl-5-(diphosphooxymethyl)pyrimidine contacts are provided by residues 39 to 43 (QLRCK) and Asn76. Mg(2+)-binding residues include Asp77 and Asp96. Ser114 contributes to the 4-amino-2-methyl-5-(diphosphooxymethyl)pyrimidine binding site. 140–142 (TPT) serves as a coordination point for 2-[(2R,5Z)-2-carboxy-4-methylthiazol-5(2H)-ylidene]ethyl phosphate. Residue Lys143 coordinates 4-amino-2-methyl-5-(diphosphooxymethyl)pyrimidine. Position 171 (Gly171) interacts with 2-[(2R,5Z)-2-carboxy-4-methylthiazol-5(2H)-ylidene]ethyl phosphate.

Belongs to the thiamine-phosphate synthase family. It depends on Mg(2+) as a cofactor.

The catalysed reaction is 2-[(2R,5Z)-2-carboxy-4-methylthiazol-5(2H)-ylidene]ethyl phosphate + 4-amino-2-methyl-5-(diphosphooxymethyl)pyrimidine + 2 H(+) = thiamine phosphate + CO2 + diphosphate. The enzyme catalyses 2-(2-carboxy-4-methylthiazol-5-yl)ethyl phosphate + 4-amino-2-methyl-5-(diphosphooxymethyl)pyrimidine + 2 H(+) = thiamine phosphate + CO2 + diphosphate. It catalyses the reaction 4-methyl-5-(2-phosphooxyethyl)-thiazole + 4-amino-2-methyl-5-(diphosphooxymethyl)pyrimidine + H(+) = thiamine phosphate + diphosphate. Its pathway is cofactor biosynthesis; thiamine diphosphate biosynthesis; thiamine phosphate from 4-amino-2-methyl-5-diphosphomethylpyrimidine and 4-methyl-5-(2-phosphoethyl)-thiazole: step 1/1. Its function is as follows. Condenses 4-methyl-5-(beta-hydroxyethyl)thiazole monophosphate (THZ-P) and 2-methyl-4-amino-5-hydroxymethyl pyrimidine pyrophosphate (HMP-PP) to form thiamine monophosphate (TMP). This Deinococcus geothermalis (strain DSM 11300 / CIP 105573 / AG-3a) protein is Thiamine-phosphate synthase.